A 323-amino-acid chain; its full sequence is Zinc finger protein 784 (323 aa).

Residues 1–26 (MAAARPEAQSRSSPTPESRSQEPLDL) form a disordered region. Polar residues predominate over residues 9–18 (QSRSSPTPES). A Phosphoserine modification is found at serine 13. 6 consecutive C2H2-type zinc fingers follow at residues 65–87 (FHCA…EHGH), 101–123 (SRCH…YSLH), 129–151 (YRCA…QHRH), 196–218 (FACR…ERVH), 224–246 (YHCG…ARIH), and 252–274 (FRCT…QRTH). The segment at 269 to 323 (KHQRTHFHGPGPGLGDSGGQLGSSAAEGSGSGCGVGDPAEEGRGETAKVKVEADQ) is disordered. A compositionally biased stretch (gly residues) spans 278–289 (PGPGLGDSGGQL). The span at 308 to 323 (EEGRGETAKVKVEADQ) shows a compositional bias: basic and acidic residues. Residue lysine 318 forms a Glycyl lysine isopeptide (Lys-Gly) (interchain with G-Cter in SUMO2) linkage.

The protein belongs to the krueppel C2H2-type zinc-finger protein family.

It is found in the nucleus. In terms of biological role, may be involved in transcriptional regulation. In Homo sapiens (Human), this protein is Zinc finger protein 784 (ZNF784).